Here is a 264-residue protein sequence, read N- to C-terminus: Ribosomal protein L11 methyltransferase (264 aa).

Residues Thr-116, Gly-137, Asp-159, and Asn-200 each coordinate S-adenosyl-L-methionine.

Belongs to the methyltransferase superfamily. PrmA family.

It localises to the cytoplasm. The enzyme catalyses L-lysyl-[protein] + 3 S-adenosyl-L-methionine = N(6),N(6),N(6)-trimethyl-L-lysyl-[protein] + 3 S-adenosyl-L-homocysteine + 3 H(+). Functionally, methylates ribosomal protein L11. This is Ribosomal protein L11 methyltransferase from Thermotoga neapolitana (strain ATCC 49049 / DSM 4359 / NBRC 107923 / NS-E).